The primary structure comprises 194 residues: uncharacterized protein (194 aa).

2 disordered regions span residues 1–72 (MAAK…PAAE) and 113–194 (VLIP…SLAV). Over residues 26–39 (AEGRSSEGRKERTA) the composition is skewed to basic and acidic residues. Positions 146-171 (GSSSTSRNQVASLAYRTQNTAASQPR) are enriched in polar residues.

This is an uncharacterized protein from Homo sapiens (Human).